Reading from the N-terminus, the 201-residue chain is MAAFPPGGTFFDTLKRSFTDVPVESGKIATTQFLEACESLTTLFDVLGSTAFKPVKSDMTGNIKKIRDRQLAAPVDSETLQDLVRNELATKKHTATEGLVWLNRALDFTAQALRQNLTNSGEEVSVSFRSAYGNTLSKHHSFMIKPIFSAAMSATPYRKDFYAKLGDDQARVEKELGVWLSSLENIVKILNDFLASKEAKW.

The interval 28–168 (IATTQFLEAC…KDFYAKLGDD (141 aa)) is glycolipid transfer protein homology domain.

Its function is as follows. Cargo transport protein that plays a key role in transport and secretion of liamocins, glycolipids (also called heavy oils) composed of a single mannitol or arabitol headgroup linked to either three, four or even six 3,5-dihydroxydecanoic ester tail-groups. This is Glycolipid transfer protein from Aureobasidium melanogenum (Aureobasidium pullulans var. melanogenum).